The chain runs to 399 residues: Guanine nucleotide-binding protein G(f) subunit alpha (399 aa).

Positions 46 to 399 constitute a G-alpha domain; the sequence is TTVKILLLGT…SENVSSMGLF (354 aa). A G1 motif region spans residues 49-62; it reads KILLLGTAESGKTT. GTP contacts are provided by residues 54–61, 188–194, 221–225, 290–293, and A371; these read GTAESGKT, LHSRKIT, DVGGQ, and NKYD. Residues 186 to 194 are G2 motif; sequence DILHSRKIT. T194 is a Mg(2+) binding site. The interval 217–226 is G3 motif; that stretch reads FQMYDVGGQR. The segment at 286-293 is G4 motif; the sequence is IVFLNKYD. The tract at residues 369 to 374 is G5 motif; the sequence is TVATDT.

The protein belongs to the G-alpha family. In terms of assembly, g proteins are composed of 3 units; alpha, beta and gamma. The alpha chain contains the guanine nucleotide binding site. During embryogenesis, expressed primarily in the developing gut and transiently in the amnioserosa.

Its function is as follows. Guanine nucleotide-binding proteins (G proteins) are involved as modulators or transducers in various transmembrane signaling systems. In Drosophila melanogaster (Fruit fly), this protein is Guanine nucleotide-binding protein G(f) subunit alpha (Galphaf).